The chain runs to 183 residues: Intermembrane phospholipid transport system binding protein MlaD (183 aa).

Residues Met-1–Glu-7 lie on the Cytoplasmic side of the membrane. The helical; Signal-anchor for type II membrane protein transmembrane segment at Ile-8–Ala-28 threads the bilayer. Topologically, residues Ala-29–Lys-183 are periplasmic. The segment at Thr-39 to Val-116 is MCE/MlaD. The interval Lys-155–Lys-183 is disordered. Positions Asn-172–Lys-183 are enriched in polar residues.

Belongs to the MlaD family. The complex is composed of two ATP-binding proteins (MlaF), two transmembrane proteins (MlaE), two cytoplasmic solute-binding proteins (MlaB) and six periplasmic solute-binding proteins (MlaD).

Its subcellular location is the cell inner membrane. Part of the ABC transporter complex MlaFEDB, which is involved in a phospholipid transport pathway that maintains lipid asymmetry in the outer membrane by retrograde trafficking of phospholipids from the outer membrane to the inner membrane. MlaD functions in substrate binding with strong affinity for phospholipids and modulates ATP hydrolytic activity of the complex. In Escherichia coli O157:H7, this protein is Intermembrane phospholipid transport system binding protein MlaD.